The sequence spans 367 residues: Peptide chain release factor 2 (367 aa).

Q254 is modified (N5-methylglutamine).

Belongs to the prokaryotic/mitochondrial release factor family. Methylated by PrmC. Methylation increases the termination efficiency of RF2.

The protein localises to the cytoplasm. Functionally, peptide chain release factor 2 directs the termination of translation in response to the peptide chain termination codons UGA and UAA. The sequence is that of Peptide chain release factor 2 from Janthinobacterium sp. (strain Marseille) (Minibacterium massiliensis).